The primary structure comprises 35 residues: U1-theraphotoxin-Hs1f (35 aa).

3 disulfide bridges follow: C3–C16, C7–C27, and C21–C32.

Belongs to the neurotoxin 12 (Hwtx-2) family. 02 (Hwtx-2) subfamily. In terms of tissue distribution, expressed by the venom gland.

It is found in the secreted. Functionally, blocks neuromuscular transmission. Acts cooperatively to potentiate the activity of huwentoxin-I. Paralyzes locusts and kills mice following intracerebroventricular injection. The protein is U1-theraphotoxin-Hs1f of Cyriopagopus schmidti (Chinese bird spider).